Consider the following 277-residue polypeptide: MPWSPGSSSAPSGDKDDIKSKLSSWTKPIRDHLSEGGNWIAPIIAAGATMGFWSFYKTYLRRIPNSAHVSPRYFHRRSLFGKVTSVGDGDGFHLYHTPGGRLAGWGWLRTVPKLKKELKGQTIPIRIAGVDAPEGGHFGRTAQPFAAEAQKFLDSHILNRRVRAYVWRRDQYDRIVATVYVRRPPFFQRKDVSMELLKQGFATTYEAKTGAEFGGPSKEIEYKVAEEVARQKGKGMWSLEKGGGFFHPSKKARAIESPMAYKRRVKLAEEPQRKLDS.

Residues 39–56 form a helical membrane-spanning segment; that stretch reads WIAPIIAAGATMGFWSFY. The TNase-like domain maps to 77-239; sequence RSLFGKVTSV…RQKGKGMWSL (163 aa). Residue arginine 126 is part of the active site. Aspartate 131 lines the Ca(2+) pocket. Active-site residues include glutamate 134 and arginine 174.

Belongs to the LCL3 family.

It is found in the mitochondrion. The protein resides in the membrane. In Podospora anserina (strain S / ATCC MYA-4624 / DSM 980 / FGSC 10383) (Pleurage anserina), this protein is Probable endonuclease LCL3 (LCL3).